We begin with the raw amino-acid sequence, 1775 residues long: ATP-dependent RNA helicase DEAH12, chloroplastic (1775 aa).

The N-terminal 33 residues, 1–33, are a transit peptide targeting the chloroplast; that stretch reads MRNSFPPSDGGRSATDRRQQSSHSSSTNRYNSR. A disordered region spans residues 1-77; it reads MRNSFPPSDG…NPSSGYSPPV (77 aa). The span at 21–34 shows a compositional bias: low complexity; sequence SSHSSSTNRYNSRS. Residues 35–60 are compositionally biased toward polar residues; the sequence is AQSSPPLNHRPTWNQQHSQYPNSNFP. The 165-residue stretch at 316 to 480 folds into the Helicase ATP-binding domain; that stretch reads LKKIHREQIM…FFSCGILLVN (165 aa). 329 to 336 lines the ATP pocket; it reads GETGSGKS. The DEAH box motif lies at 427–430; sequence DEAH. The 167-residue stretch at 510-676 folds into the Helicase C-terminal domain; it reads DVVKMAVEIH…VALLRMLALG (167 aa). Residues 1560-1767 form a TRIAD supradomain region; it reads IEVECPICLS…EPCYAHLRTI (208 aa). The Zn(2+) site is built by Cys-1564, Cys-1567, Cys-1580, His-1582, Cys-1585, Cys-1588, Cys-1607, Cys-1612, Cys-1652, Cys-1657, Cys-1675, Cys-1678, Cys-1683, Cys-1686, His-1691, Cys-1696, Cys-1722, and Cys-1725. The segment at 1564 to 1612 adopts an RING-type 1 zinc-finger fold; that stretch reads CPICLSEVDDGYSLEGCSHLFCKACLLEQFEASMRNFDAFPILCSHIDC. The IBR-type zinc finger occupies 1631–1696; it reads DELFSASLSS…HLEYHPLITC (66 aa). Residues 1722 to 1750 form an RING-type 2; atypical zinc finger; it reads CPICKSTIEKTDGCNHMKCRCGKHICWTC. Cys-1735 is a catalytic residue. Zn(2+) is bound by residues Cys-1740 and Cys-1742.

It belongs to the DEAD box helicase family. DEAH subfamily.

The protein localises to the plastid. It is found in the chloroplast. The enzyme catalyses ATP + H2O = ADP + phosphate + H(+). The protein is ATP-dependent RNA helicase DEAH12, chloroplastic of Arabidopsis thaliana (Mouse-ear cress).